The primary structure comprises 707 residues: MEIEEIKVQTEVNGAPFIIETGYFAKQANGAVIVRQGDTAVLVAAVMSEEPQADIDFLPLTVEYREKYYAYGKIPGGFVKREGKPTDREILVARNIDRPIRPLFPKGFYNDIVITAYTLSADDKYDPDVLGIVGASAALHISDIPFEGPIAGVRVCRVNGEFIVNPTYQQKAQADIEIVVAGSKDAIVMVEGGAKEVPEEDILEAMMFGHQEIKKLIELQEELRLKCGKEKIQVAIDEEEIILKDKLKEFSYEKIKEAFKITDKKQRNKTINAIFEEAFKTLEIPEEKIKKASFIYKDIVSNVMRDNILNEGIRIDGRKPEEIRPIWIKVGVFPRNHGSAIFTRGQTQAFVTVTLGSLSEGQIEESIEAGEVMKRFMLHYNFPPFSTGEAKPPRATSRREIGHGNLAERALEPLIPPEEEFPYAIRVVSDILESNGSTSMATVCGGSLALFDAGVPMKKHVAGIAMGLIKAEDKFVILSDILGDEDHLGDMDFKVAGTRDGVTSIQMDIKVKGLTKEILEKALQQARDGRNYILDLMYQAIPEPRKEVSPYAPTVTTLRVLPDKIPIIIGPAGKNIKKIIEETKVKIDLDPEGLVKIYATSKEAAEKAVSMINELILDVEVGEVYMGKVTRVEDYGAFVELLPGRLSLLHVSQITGERLKSAKEKIKVGDVLKVKVSEIDDQGRIKVSLKDVPENVEPKNKFLFKEE.

Residues aspartate 486 and aspartate 492 each coordinate Mg(2+). The KH domain occupies 553 to 612 (PTVTTLRVLPDKIPIIIGPAGKNIKKIIEETKVKIDLDPEGLVKIYATSKEAAEKAVSMI). The S1 motif domain maps to 622–690 (GEVYMGKVTR…DQGRIKVSLK (69 aa)).

It belongs to the polyribonucleotide nucleotidyltransferase family. Mg(2+) is required as a cofactor.

The protein localises to the cytoplasm. The catalysed reaction is RNA(n+1) + phosphate = RNA(n) + a ribonucleoside 5'-diphosphate. Its function is as follows. Involved in mRNA degradation. Catalyzes the phosphorolysis of single-stranded polyribonucleotides processively in the 3'- to 5'-direction. The polypeptide is Polyribonucleotide nucleotidyltransferase (Sulfurihydrogenibium azorense (strain DSM 15241 / OCM 825 / Az-Fu1)).